A 239-amino-acid polypeptide reads, in one-letter code: Uridylate kinase (239 aa).

10–13 (KLSG) provides a ligand contact to ATP. Residues 18 to 23 (GEQGYG) form an involved in allosteric activation by GTP region. Residue G52 participates in UMP binding. G53 and R57 together coordinate ATP. UMP contacts are provided by residues D72 and 133–140 (TGNPYFST). ATP contacts are provided by N161, Y167, and E170.

It belongs to the UMP kinase family. As to quaternary structure, homohexamer.

It is found in the cytoplasm. The enzyme catalyses UMP + ATP = UDP + ADP. It functions in the pathway pyrimidine metabolism; CTP biosynthesis via de novo pathway; UDP from UMP (UMPK route): step 1/1. With respect to regulation, allosterically activated by GTP. Inhibited by UTP. In terms of biological role, catalyzes the reversible phosphorylation of UMP to UDP. This chain is Uridylate kinase, found in Halalkalibacterium halodurans (strain ATCC BAA-125 / DSM 18197 / FERM 7344 / JCM 9153 / C-125) (Bacillus halodurans).